The following is a 133-amino-acid chain: UPF0344 protein SH1980 (133 aa).

The next 4 helical transmembrane spans lie at 1 to 21 (MLHM…IAFL), 42 to 62 (VFML…FMAA), 71 to 91 (MLLT…EVSI), and 103 to 123 (LFWA…ILPW).

This sequence belongs to the UPF0344 family.

The protein localises to the cell membrane. The chain is UPF0344 protein SH1980 from Staphylococcus haemolyticus (strain JCSC1435).